A 558-amino-acid polypeptide reads, in one-letter code: Acylase ACY 1 proenzyme (558 aa).

The active-site Nucleophile is Thr-368.

This sequence belongs to the gamma-glutamyltransferase family. In terms of assembly, dimer of two non-identical chains processed from the same precursor.

The enzyme catalyses (7R)-7-(4-carboxybutanamido)cephalosporanate + H2O = (7R)-7-aminocephalosporanate + glutarate. It catalyses the reaction an N-terminal (5-L-glutamyl)-[peptide] + an alpha-amino acid = 5-L-glutamyl amino acid + an N-terminal L-alpha-aminoacyl-[peptide]. The catalysed reaction is glutathione + H2O = L-cysteinylglycine + L-glutamate. It carries out the reaction an S-substituted glutathione + H2O = an S-substituted L-cysteinylglycine + L-glutamate. Its function is as follows. Besides the cephalosporin acylase I activity which converts GL-7ACA into 7-ACA; this enzyme displays some gamma glutamyltranspeptidase activity. The protein is Acylase ACY 1 proenzyme (acyI) of Pseudomonas sp. (strain SE83).